Consider the following 500-residue polypeptide: Zinc finger protein 689 (500 aa).

Residues 1–24 (MAPPSAPLLEQAPGEVGPTRRRGR) form a disordered region. One can recognise a KRAB domain in the interval 29–100 (LKFADVAVYF…AALDPQEYRR (72 aa)). The segment at 110-144 (TRQKNEEKEVFPPKDVPRKGKRGRKPSKPRLIARQ) is disordered. Positions 112-127 (QKNEEKEVFPPKDVPR) are enriched in basic and acidic residues. Residues 128-137 (KGKRGRKPSK) show a composition bias toward basic residues. Residues 149–171 (PICPDCGCTFPDLPALESHKCAQ) form a C2H2-type 1; degenerate zinc finger. 10 consecutive C2H2-type zinc fingers follow at residues 177–199 (YPCP…RRAH), 205–227 (YVCD…QVIH), 233–255 (YHCP…RTTH), 261–283 (HQCP…QRTH), 289–311 (YTCL…QRIH), 317–339 (YPCP…RRVH), 345–367 (YACE…QLLH), 373–395 (YPCP…RSTH), 401–423 (HACD…RRVH), and 429–451 (YACD…QLLH). Residue lysine 455 forms a Glycyl lysine isopeptide (Lys-Gly) (interchain with G-Cter in SUMO2) linkage. The segment at 457–482 (FPCLECGRCFRQRWSLAVHKCCPNTH) adopts a C2H2-type 12 zinc-finger fold.

The protein belongs to the krueppel C2H2-type zinc-finger protein family.

Its subcellular location is the nucleus. May be involved in transcriptional regulation. This Rattus norvegicus (Rat) protein is Zinc finger protein 689 (Znf689).